Reading from the N-terminus, the 444-residue chain is Enolase 2 (444 aa).

Substrate is bound by residues histidine 165 and glutamate 174. Glutamate 217 (proton donor) is an active-site residue. 3 residues coordinate Mg(2+): aspartate 252, glutamate 303, and aspartate 330. Glutamate 303 and aspartate 330 together coordinate substrate. Residue lysine 355 is the Proton acceptor of the active site. Substrate is bound by residues 382-385 (SHRS) and lysine 406.

This sequence belongs to the enolase family. As to quaternary structure, homodimer. The cofactor is Mg(2+).

The protein resides in the cytoplasm. The catalysed reaction is (2R)-2-phosphoglycerate = phosphoenolpyruvate + H2O. It functions in the pathway carbohydrate degradation; glycolysis; pyruvate from D-glyceraldehyde 3-phosphate: step 4/5. The polypeptide is Enolase 2 (ENO2) (Toxoplasma gondii).